The following is a 61-amino-acid chain: uncharacterized protein (61 aa).

Over 1–20 (MSSTTSTINLSSLGSAINDV) the chain is Extracellular. The helical transmembrane segment at 21–41 (LNIIVQYLPVFVTVAVLFGII) threads the bilayer. Residues 42–61 (TYMTGGLGGLFSGITGIFGS) lie on the Cytoplasmic side of the membrane.

It is found in the host membrane. This is an uncharacterized protein from Acidianus filamentous virus 2 (isolate Italy/Pozzuoli) (AFV-2).